Reading from the N-terminus, the 552-residue chain is Elongator complex protein 3 (552 aa).

In terms of domain architecture, Radical SAM core spans arginine 84–proline 374. [4Fe-4S] cluster is bound by residues cysteine 101, cysteine 111, and cysteine 114. Acetyl-CoA-binding positions include lysine 166, glutamate 476–valine 479, phenylalanine 499–methionine 501, and tyrosine 532. Residues threonine 398–asparagine 552 form the N-acetyltransferase domain.

It belongs to the ELP3 family. In terms of assembly, component of the elongator complex composed of Elp1, Elp2, Elp3, Elp4, Elp5 and Elp6. The elongator complex associates with and stabilizes microtubules; efficient interaction requires the full complex. The cofactor is [4Fe-4S] cluster.

It is found in the cytoplasm. The protein localises to the nucleus. The protein resides in the cytoskeleton. It localises to the spindle. It carries out the reaction uridine(34) in tRNA + acetyl-CoA + S-adenosyl-L-methionine + H2O = 5-(carboxymethyl)uridine(34) in tRNA + 5'-deoxyadenosine + L-methionine + CoA + 2 H(+). It functions in the pathway tRNA modification; 5-methoxycarbonylmethyl-2-thiouridine-tRNA biosynthesis. In terms of biological role, catalytic tRNA acetyltransferase subunit of the elongator complex, which is required for multiple tRNA modifications, including mcm5U (5-methoxycarbonylmethyl uridine), mcm5s2U (5-methoxycarbonylmethyl-2-thiouridine), and ncm5U (5-carbamoylmethyl uridine). In the elongator complex, acts as a tRNA uridine(34) acetyltransferase by mediating formation of carboxymethyluridine in the wobble base at position 34 in tRNAs. Binding by the elongator complex stabilizes microtubules and promotes their growth. This induces central spindle asymmetry, promoting polarized signaling endosome trafficking during asymmetric cell division and cell fate assignation of sensory organ precursor cells. Plays a role in the control of synaptic bouton expansion. Required for larval development. Involved in protein synthesis-dependent long-term memory formation, probably as part of the elongator complex. The protein is Elongator complex protein 3 of Drosophila melanogaster (Fruit fly).